The sequence spans 246 residues: Probable transcriptional regulatory protein CLK_2466 (246 aa).

It belongs to the TACO1 family.

It is found in the cytoplasm. The chain is Probable transcriptional regulatory protein CLK_2466 from Clostridium botulinum (strain Loch Maree / Type A3).